We begin with the raw amino-acid sequence, 442 residues long: Tubby-related protein 3 (442 aa).

Residues 23-68 form a required for association with the IFT complex A (IFT-A) region; the sequence is MRQAKLDYQRLLLEKRQRKKRLEPFMVQPNPEARLRRAKPRASDEQ. A disordered region spans residues 101–177; that stretch reads PSVSSSVVEE…TSGSATAAQP (77 aa). Polar residues predominate over residues 145–162; the sequence is GISQSACLERPNSASSQN. The segment covering 163-175 has biased composition (low complexity); the sequence is STDTGTSGSATAA.

It belongs to the TUB family. As to quaternary structure, associates with the IFT complex A (IFT-A). Interacts with SIRT1. As to expression, expressed at high levels in testis, ovaries, thyroid, and spinal cord.

The protein localises to the nucleus. It localises to the cell membrane. It is found in the cell projection. Its subcellular location is the cilium. The protein resides in the cytoplasm. The protein localises to the secreted. Its function is as follows. Negative regulator of the Shh signaling transduction pathway: recruited to primary cilia via association with the IFT complex A (IFT-A) and is required for recruitment of G protein-coupled receptor GPR161 to cilia, a promoter of PKA-dependent basal repression machinery in Shh signaling. Binds to phosphorylated inositide (phosphoinositide) lipids. Both IFT-A- and phosphoinositide-binding properties are required to regulate ciliary G protein-coupled receptor trafficking. During adipogenesis, regulates ciliary trafficking of FFAR4 in preadipocytes. This Homo sapiens (Human) protein is Tubby-related protein 3.